Consider the following 363-residue polypeptide: Dual-specificity RNA methyltransferase RlmN (363 aa).

Glutamate 102 serves as the catalytic Proton acceptor. One can recognise a Radical SAM core domain in the interval 108-344 (EKKRSTLCVS…TTTIRKNRGE (237 aa)). Cysteine 115 and cysteine 350 are oxidised to a cystine. [4Fe-4S] cluster-binding residues include cysteine 122, cysteine 126, and cysteine 129. Residues 174 to 175 (GE), serine 206, 228 to 230 (SLH), and asparagine 307 each bind S-adenosyl-L-methionine. Cysteine 350 (S-methylcysteine intermediate) is an active-site residue.

It belongs to the radical SAM superfamily. RlmN family. [4Fe-4S] cluster is required as a cofactor.

The protein localises to the cytoplasm. It catalyses the reaction adenosine(2503) in 23S rRNA + 2 reduced [2Fe-2S]-[ferredoxin] + 2 S-adenosyl-L-methionine = 2-methyladenosine(2503) in 23S rRNA + 5'-deoxyadenosine + L-methionine + 2 oxidized [2Fe-2S]-[ferredoxin] + S-adenosyl-L-homocysteine. The catalysed reaction is adenosine(37) in tRNA + 2 reduced [2Fe-2S]-[ferredoxin] + 2 S-adenosyl-L-methionine = 2-methyladenosine(37) in tRNA + 5'-deoxyadenosine + L-methionine + 2 oxidized [2Fe-2S]-[ferredoxin] + S-adenosyl-L-homocysteine. Its function is as follows. Specifically methylates position 2 of adenine 2503 in 23S rRNA and position 2 of adenine 37 in tRNAs. m2A2503 modification seems to play a crucial role in the proofreading step occurring at the peptidyl transferase center and thus would serve to optimize ribosomal fidelity. In Buchnera aphidicola subsp. Acyrthosiphon pisum (strain APS) (Acyrthosiphon pisum symbiotic bacterium), this protein is Dual-specificity RNA methyltransferase RlmN.